The following is a 350-amino-acid chain: D-alanine--D-alanine ligase (350 aa).

Residues 143–344 form the ATP-grasp domain; sequence KRILSTFGIS…FKSLINKLIL (202 aa). 172–227 contributes to the ATP binding site; that stretch reads INNIKFPCCIKPSNQGSSFGVNVANDFISLKESIDVAFLYSKKILIEPFIQGREIE. The Mg(2+) site is built by Asp-298, Glu-311, and Asn-313.

It belongs to the D-alanine--D-alanine ligase family. The cofactor is Mg(2+). Mn(2+) is required as a cofactor.

It localises to the cytoplasm. It catalyses the reaction 2 D-alanine + ATP = D-alanyl-D-alanine + ADP + phosphate + H(+). It functions in the pathway cell wall biogenesis; peptidoglycan biosynthesis. Cell wall formation. The chain is D-alanine--D-alanine ligase from Wigglesworthia glossinidia brevipalpis.